A 374-amino-acid chain; its full sequence is Tetraacyldisaccharide 4'-kinase (374 aa).

Residue 43-50 (TMGGTGKT) coordinates ATP.

It belongs to the LpxK family.

The enzyme catalyses a lipid A disaccharide + ATP = a lipid IVA + ADP + H(+). Its pathway is glycolipid biosynthesis; lipid IV(A) biosynthesis; lipid IV(A) from (3R)-3-hydroxytetradecanoyl-[acyl-carrier-protein] and UDP-N-acetyl-alpha-D-glucosamine: step 6/6. Transfers the gamma-phosphate of ATP to the 4'-position of a tetraacyldisaccharide 1-phosphate intermediate (termed DS-1-P) to form tetraacyldisaccharide 1,4'-bis-phosphate (lipid IVA). The sequence is that of Tetraacyldisaccharide 4'-kinase from Leptospira biflexa serovar Patoc (strain Patoc 1 / Ames).